The sequence spans 207 residues: Glycerol-3-phosphate acyltransferase (207 aa).

5 helical membrane passes run 2–22 (ILVL…GVVI), 47–67 (MLGP…GTLA), 72–92 (ILFG…AVFG), 121–141 (FFVI…MVSV), and 155–175 (LVYH…VFLI).

It belongs to the PlsY family. In terms of assembly, probably interacts with PlsX.

Its subcellular location is the cell membrane. The catalysed reaction is an acyl phosphate + sn-glycerol 3-phosphate = a 1-acyl-sn-glycero-3-phosphate + phosphate. It participates in lipid metabolism; phospholipid metabolism. Functionally, catalyzes the transfer of an acyl group from acyl-phosphate (acyl-PO(4)) to glycerol-3-phosphate (G3P) to form lysophosphatidic acid (LPA). This enzyme utilizes acyl-phosphate as fatty acyl donor, but not acyl-CoA or acyl-ACP. In Lacticaseibacillus casei (strain BL23) (Lactobacillus casei), this protein is Glycerol-3-phosphate acyltransferase.